Reading from the N-terminus, the 399-residue chain is MSHFAKVARVPGDPILGLLDAYRNDPRADKLDLGVGVYKDAQGLTPILRSVKLAEQRLVEQETTKSYVGGHGDALFAARLAELALGAASPLLLEQRADATQTPGGTGALRLAGDFIAHCLPGRGIWLSDPTWPIHETLFAAAGLKVSHYPYVSADNRLDVEAMLAGLERIPQGDVVLLHACCHNPTGFDLSHDDWRRVLDVVRRRELLPLIDFAYQGFGDGLEEDAWAVRLFAGELPEVLVTSSCSKNFGLYRDRVGALIVCAQNAEKLTDLRSQLAFLARNLWSTPPAHGAEVVAAILGDSELKGLWQEEVEGMRSRIASLRIGLVEALAPHGLAERFAHVGAQRGMFSYTGLSPQQVARLRDEHAVYLVSSGRANVAGLDARRLDRLAQAIAQVCAD.

Substrate is bound by residues Gly36, Tyr67, Trp132, and Asn184. Position 247 is an N6-(pyridoxal phosphate)lysine (Lys247). Substrate is bound at residue Arg375.

The protein belongs to the class-I pyridoxal-phosphate-dependent aminotransferase family. In terms of assembly, homodimer. Pyridoxal 5'-phosphate is required as a cofactor.

The protein localises to the cytoplasm. The enzyme catalyses an aromatic L-alpha-amino acid + 2-oxoglutarate = an aromatic oxo-acid + L-glutamate. This Pseudomonas aeruginosa (strain ATCC 15692 / DSM 22644 / CIP 104116 / JCM 14847 / LMG 12228 / 1C / PRS 101 / PAO1) protein is Aromatic-amino-acid aminotransferase (phhC).